The sequence spans 178 residues: NADH-quinone oxidoreductase subunit B 1 (178 aa).

[4Fe-4S] cluster is bound by residues Cys39, Cys40, Cys104, and Cys135.

The protein belongs to the complex I 20 kDa subunit family. In terms of assembly, NDH-1 is composed of 14 different subunits. Subunits NuoB, C, D, E, F, and G constitute the peripheral sector of the complex. [4Fe-4S] cluster serves as cofactor.

The protein localises to the cell inner membrane. It catalyses the reaction a quinone + NADH + 5 H(+)(in) = a quinol + NAD(+) + 4 H(+)(out). Its function is as follows. NDH-1 shuttles electrons from NADH, via FMN and iron-sulfur (Fe-S) centers, to quinones in the respiratory chain. The immediate electron acceptor for the enzyme in this species is believed to be a menaquinone. Couples the redox reaction to proton translocation (for every two electrons transferred, four hydrogen ions are translocated across the cytoplasmic membrane), and thus conserves the redox energy in a proton gradient. In Cytophaga hutchinsonii (strain ATCC 33406 / DSM 1761 / CIP 103989 / NBRC 15051 / NCIMB 9469 / D465), this protein is NADH-quinone oxidoreductase subunit B 1.